The following is a 66-amino-acid chain: ATP synthase protein 8 (66 aa).

The chain crosses the membrane as a helical span at residues 8-24; sequence PWPMVIMSMILTLFYIT. Lys-54 carries the N6-acetyllysine; alternate modification. An N6-succinyllysine; alternate modification is found at Lys-54. Position 57 is an N6-acetyllysine (Lys-57).

This sequence belongs to the ATPase protein 8 family. F-type ATPases have 2 components, CF(1) - the catalytic core - and CF(0) - the membrane proton channel. Component of an ATP synthase complex composed of ATP5PB, ATP5MC1, ATP5F1E, ATP5PD, ATP5ME, ATP5PF, ATP5MF, MT-ATP6, MT-ATP8, ATP5F1A, ATP5F1B, ATP5F1D, ATP5F1C, ATP5PO, ATP5MG, ATP5MK and ATP5MJ. Interacts with PRICKLE3.

It is found in the mitochondrion membrane. Mitochondrial membrane ATP synthase (F(1)F(0) ATP synthase or Complex V) produces ATP from ADP in the presence of a proton gradient across the membrane which is generated by electron transport complexes of the respiratory chain. F-type ATPases consist of two structural domains, F(1) - containing the extramembraneous catalytic core and F(0) - containing the membrane proton channel, linked together by a central stalk and a peripheral stalk. During catalysis, ATP synthesis in the catalytic domain of F(1) is coupled via a rotary mechanism of the central stalk subunits to proton translocation. Part of the complex F(0) domain. Minor subunit located with subunit a in the membrane. The polypeptide is ATP synthase protein 8 (MT-ATP8) (Alouatta sara (Bolivian red howler monkey)).